Consider the following 216-residue polypeptide: Cell envelope integrity protein Cei (216 aa).

The helical transmembrane segment at 25–45 threads the bilayer; sequence PAIVVVAFLVVVTCVMWTLAL.

It is found in the cell membrane. Contributes to cell envelope integrity and virulence. In Mycobacterium tuberculosis (strain ATCC 25618 / H37Rv), this protein is Cell envelope integrity protein Cei.